A 430-amino-acid chain; its full sequence is Levansucrase Lscgamma (430 aa).

Positions 60, 61, 147, 217, and 218 each coordinate sucrose. Asp-61 serves as the catalytic Nucleophile. Catalysis depends on Glu-302, which acts as the Proton donor/acceptor.

The protein belongs to the glycosyl hydrolase 68 family. As to quaternary structure, homodimer.

It catalyses the reaction [6)-beta-D-fructofuranosyl-(2-&gt;](n) alpha-D-glucopyranoside + sucrose = [6)-beta-D-fructofuranosyl-(2-&gt;](n+1) alpha-D-glucopyranoside + D-glucose. Its activity is regulated as follows. Sucrose hydrolase activity is negatively affected by salt concentration. The levan polymerization rate increases sharply in relation to sucrose concentration reaching the maximum at 100 mM sucrose, and then steadily decreases, suggesting a strong inhibition of the activity by the substrate. Its function is as follows. Catalyzes the synthesis of levan, a fructose polymer, by transferring the fructosyl moiety from sucrose to a growing acceptor molecule. Also displays sucrose hydrolase activity. Can depolymerize the levan produced once substrate is completely exhausted. This chain is Levansucrase Lscgamma, found in Pseudomonas syringae pv. actinidiae.